A 100-amino-acid chain; its full sequence is Small ribosomal subunit protein uS14m (100 aa).

Belongs to the universal ribosomal protein uS14 family.

Its subcellular location is the mitochondrion. This Brassica napus (Rape) protein is Small ribosomal subunit protein uS14m (RPS14).